Here is a 339-residue protein sequence, read N- to C-terminus: Ferredoxin--NADP reductase (339 aa).

FAD is bound by residues Asp-32, Gln-40, Tyr-45, Val-85, Phe-120, Asp-287, and Thr-327.

The protein belongs to the ferredoxin--NADP reductase type 2 family. As to quaternary structure, homodimer. FAD serves as cofactor.

The catalysed reaction is 2 reduced [2Fe-2S]-[ferredoxin] + NADP(+) + H(+) = 2 oxidized [2Fe-2S]-[ferredoxin] + NADPH. The polypeptide is Ferredoxin--NADP reductase (Wolbachia sp. subsp. Brugia malayi (strain TRS)).